Reading from the N-terminus, the 158-residue chain is NAD(P)H-quinone oxidoreductase subunit J, chloroplastic (158 aa).

It belongs to the complex I 30 kDa subunit family. NDH is composed of at least 16 different subunits, 5 of which are encoded in the nucleus.

The protein localises to the plastid. Its subcellular location is the chloroplast thylakoid membrane. The enzyme catalyses a plastoquinone + NADH + (n+1) H(+)(in) = a plastoquinol + NAD(+) + n H(+)(out). It catalyses the reaction a plastoquinone + NADPH + (n+1) H(+)(in) = a plastoquinol + NADP(+) + n H(+)(out). Functionally, NDH shuttles electrons from NAD(P)H:plastoquinone, via FMN and iron-sulfur (Fe-S) centers, to quinones in the photosynthetic chain and possibly in a chloroplast respiratory chain. The immediate electron acceptor for the enzyme in this species is believed to be plastoquinone. Couples the redox reaction to proton translocation, and thus conserves the redox energy in a proton gradient. This chain is NAD(P)H-quinone oxidoreductase subunit J, chloroplastic, found in Fagopyrum esculentum subsp. ancestrale (Wild buckwheat).